The primary structure comprises 494 residues: Maintenance of mitochondrial morphology protein 1 (494 aa).

Residues 1–22 (MSSQPGDPATLPAQSSLSFTQG) lie on the Lumenal side of the membrane. The helical transmembrane segment at 23 to 43 (FLLGQLSVVLVLAAFIKFFIF) threads the bilayer. Residues 44–494 (GEAPPPPSRG…GSLPEAVTPG (451 aa)) lie on the Cytoplasmic side of the membrane. Disordered regions lie at residues 50–98 (PSRG…SSST), 274–330 (PPLD…KSNV), 398–426 (VRTG…ARHE), and 449–494 (VASR…VTPG). Residues 54–64 (LSHRSATHRRS) show a composition bias toward basic residues. Composition is skewed to polar residues over residues 65–76 (NSIYSNSPQEAG) and 85–98 (STSN…SSST). The SMP-LTD domain maps to 130–387 (QPESLDWFNV…EPRVQVVGLP (258 aa)). Pro residues predominate over residues 274–286 (PPLDTPSHSPSPP). Composition is skewed to polar residues over residues 406–416 (TASNGPRSTVS) and 466–477 (RSMTRQESSGDL).

The protein belongs to the MMM1 family. In terms of assembly, homodimer. Component of the ER-mitochondria encounter structure (ERMES) or MDM complex, composed of mmm1, mdm10, mdm12 and mdm34. A mmm1 homodimer associates with one molecule of mdm12 on each side in a pairwise head-to-tail manner, and the SMP-LTD domains of mmm1 and mdm12 generate a continuous hydrophobic tunnel for phospholipid trafficking.

It is found in the endoplasmic reticulum membrane. Its function is as follows. Component of the ERMES/MDM complex, which serves as a molecular tether to connect the endoplasmic reticulum (ER) and mitochondria. Components of this complex are involved in the control of mitochondrial shape and protein biogenesis, and function in nonvesicular lipid trafficking between the ER and mitochondria. The mdm12-mmm1 subcomplex functions in the major beta-barrel assembly pathway that is responsible for biogenesis of all outer membrane beta-barrel proteins, and acts in a late step after the SAM complex. The mdm10-mdm12-mmm1 subcomplex further acts in the TOM40-specific pathway after the action of the mdm12-mmm1 complex. Essential for establishing and maintaining the structure of mitochondria and maintenance of mtDNA nucleoids. The chain is Maintenance of mitochondrial morphology protein 1 from Aspergillus clavatus (strain ATCC 1007 / CBS 513.65 / DSM 816 / NCTC 3887 / NRRL 1 / QM 1276 / 107).